We begin with the raw amino-acid sequence, 35 residues long: MARKQKTLLCRNCRETKIAVDRVCPTCGCRLVPPY.

This is an uncharacterized protein from Haloarcula hispanica (His1V).